The chain runs to 1870 residues: Non-reducing polyketide synthase pkgA (1870 aa).

Residues 40-279 (IQDLIRRLHR…SRHSALPISG (240 aa)) form an N-terminal acylcarrier protein transacylase domain (SAT) region. One can recognise a Ketosynthase family 3 (KS3) domain in the interval 416-838 (DAKLAVVGMA…GGNTTLLLED (423 aa)). A disordered region spans residues 453-492 (PPDRFDLDAHFDPSGEKENTTTKGSQSNRPLSRQAEQTDP). Basic and acidic residues predominate over residues 455–472 (DRFDLDAHFDPSGEKENT). The segment covering 473-492 (TTKGSQSNRPLSRQAEQTDP) has biased composition (polar residues). Residues C577, H712, and H755 each act as for beta-ketoacyl synthase activity in the active site. A malonyl-CoA:ACP transacylase (MAT) domain region spans residues 947-1282 (AFSGQGCLYH…QSFASLRRGD (336 aa)). A disordered region spans residues 1004–1027 (RCPHRESTPSSDASHDSNTNRTST). Residues 1011–1027 (TPSSDASHDSNTNRTST) show a composition bias toward polar residues. The product template (PT) domain stretch occupies residues 1364–1704 (TSSVQQIIFE…PRALMPVLFP (341 aa)). The segment at 1368-1502 (QQIIFEEYDE…ATVCYEEAQD (135 aa)) is N-terminal hotdog fold. The PKS/mFAS DH domain maps to 1368 to 1700 (QQIIFEEYDE…FKAVPRALMP (333 aa)). H1400 serves as the catalytic Proton acceptor; for dehydratase activity. The interval 1538–1700 (KGGPRVNNFF…FKAVPRALMP (163 aa)) is C-terminal hotdog fold. The Proton donor; for dehydratase activity role is filled by D1602. A Carrier domain is found at 1795-1870 (QSQNAQATAC…VQDLVTWLSK (76 aa)). At S1832 the chain carries O-(pantetheine 4'-phosphoryl)serine.

Pantetheine 4'-phosphate is required as a cofactor.

It catalyses the reaction holo-[ACP] + 6 malonyl-CoA + acetyl-CoA + 6 H(+) = 3,5,7,9,11,13-hexaoxotetradecanoyl-[ACP] + 6 CO2 + 7 CoA. The catalysed reaction is holo-[ACP] + 5 malonyl-CoA + acetyl-CoA + 5 H(+) = 3,5,7,9,11-pentaoxododecanoyl-[ACP] + 5 CO2 + 6 CoA. The protein operates within secondary metabolite biosynthesis. Its function is as follows. Non-reducing polyketide synthase; part of the pkg gene cluster that mediates the biosynthesis of dihydrocitreoisocoumarin and 6,8-dihydroxy-3-(2-oxopropyl)-isocoumarin. The non-reducing polyketide synthase pkgA performs the condensation of one acetyl-CoA starter unit with 6 and 5 malonyl-CoA units, respectively. As pkgA lacks a releasing domain, the thioesterase pkgB is necessary to break the thioester bond and release dihydrocitreoisocoumarin and 6,8-dihydroxy-3-(2-oxopropyl)-isocoumarin from pkgA. The polypeptide is Non-reducing polyketide synthase pkgA (Emericella nidulans (strain FGSC A4 / ATCC 38163 / CBS 112.46 / NRRL 194 / M139) (Aspergillus nidulans)).